The following is a 359-amino-acid chain: Guanine nucleotide-binding protein alpha-4 subunit (359 aa).

Residue glycine 2 is the site of N-myristoyl glycine attachment. Cysteine 3 is lipidated: S-palmitoyl cysteine. The G-alpha domain maps to threonine 31 to phenylalanine 359. The interval lysine 34 to threonine 47 is G1 motif. GTP is bound by residues glycine 39–serine 46, leucine 178–serine 184, aspartate 203–glutamine 207, asparagine 272–aspartate 275, and alanine 331. Position 46 (serine 46) interacts with Mg(2+). Residues aspartate 176–serine 184 are G2 motif. A G3 motif region spans residues phenylalanine 199–arginine 208. The tract at residues isoleucine 268–aspartate 275 is G4 motif. The interval threonine 329 to threonine 334 is G5 motif.

It belongs to the G-alpha family. G(i/o/t/z) subfamily. G proteins are composed of 3 units; alpha, beta and gamma. The alpha chain contains the guanine nucleotide binding site.

In terms of biological role, guanine nucleotide-binding proteins (G proteins) are involved as modulators or transducers in various transmembrane signaling systems. This is Guanine nucleotide-binding protein alpha-4 subunit (gpa-4) from Caenorhabditis briggsae.